The following is a 157-amino-acid chain: Ribosome maturation factor RimP (157 aa).

This sequence belongs to the RimP family.

It localises to the cytoplasm. Functionally, required for maturation of 30S ribosomal subunits. The chain is Ribosome maturation factor RimP from Thermus thermophilus (strain ATCC BAA-163 / DSM 7039 / HB27).